A 249-amino-acid polypeptide reads, in one-letter code: Triosephosphate isomerase (249 aa).

Residues asparagine 12 and lysine 14 each contribute to the substrate site. Lysine 14 is subject to N6-acetyllysine. 3'-nitrotyrosine is present on tyrosine 68. Residues serine 80 and serine 106 each carry the phosphoserine modification. A Glycyl lysine isopeptide (Lys-Gly) (interchain with G-Cter in SUMO1) cross-link involves residue lysine 142. N6-succinyllysine is present on lysine 149. At lysine 156 the chain carries N6-acetyllysine; alternate. Lysine 156 carries the post-translational modification N6-succinyllysine; alternate. At serine 159 the chain carries Phosphoserine. The active-site Proton acceptor is glutamate 166. Threonine 173 carries the post-translational modification Phosphothreonine. N6-acetyllysine; alternate is present on lysine 194. Lysine 194 carries the post-translational modification N6-succinyllysine; alternate. Lysine 194 is subject to N6-methyllysine; alternate. The residue at position 198 (serine 198) is a Phosphoserine. Residue tyrosine 209 is modified to 3'-nitrotyrosine. Serine 212 is modified (phosphoserine). Threonine 214 carries the phosphothreonine modification. Serine 223 carries the post-translational modification Phosphoserine. Lysine 238 carries the post-translational modification N6-acetyllysine.

Belongs to the triosephosphate isomerase family. In terms of assembly, homodimer.

It is found in the cytoplasm. The catalysed reaction is D-glyceraldehyde 3-phosphate = dihydroxyacetone phosphate. It catalyses the reaction dihydroxyacetone phosphate = methylglyoxal + phosphate. It participates in carbohydrate biosynthesis; gluconeogenesis. It functions in the pathway carbohydrate degradation; glycolysis; D-glyceraldehyde 3-phosphate from glycerone phosphate: step 1/1. In terms of biological role, triosephosphate isomerase is an extremely efficient metabolic enzyme that catalyzes the interconversion between dihydroxyacetone phosphate (DHAP) and D-glyceraldehyde-3-phosphate (G3P) in glycolysis and gluconeogenesis. Functionally, it is also responsible for the non-negligible production of methylglyoxal a reactive cytotoxic side-product that modifies and can alter proteins, DNA and lipids. The protein is Triosephosphate isomerase of Mesocricetus auratus (Golden hamster).